The primary structure comprises 433 residues: Steroid hormone receptor ERR2 (433 aa).

The disordered stretch occupies residues 1-38 (MSSDDRHLGSSCGSFIKTEPSSPSSGIDALSHHSPSGS). Low complexity predominate over residues 28–38 (DALSHHSPSGS). The interval 93–211 (YMLNAIPKRL…SPPAKKPLTK (119 aa)) is interaction with NANOG. Positions 100-186 (KRLCLVCGDI…RVRGGRQKYK (87 aa)) form a DNA-binding region, nuclear receptor. 2 consecutive NR C4-type zinc fingers follow at residues 103-123 (CLVC…CEAC) and 139-163 (CPAT…FMKC). Residues 203 to 433 (PPAKKPLTKI…LFLEMLEAKV (231 aa)) form an essential for ESRRB transcriptional activity and interaction with NCOA3 region. Positions 208 to 432 (PLTKIVSYLL…KLFLEMLEAK (225 aa)) constitute an NR LBD domain.

Belongs to the nuclear hormone receptor family. NR3 subfamily. As to quaternary structure, binds DNA as a monomer. Interacts with NR0B1; represses ESRRB activity at the GATA6 promoter. Interacts with NANOG; reciprocally modulates their transcriptional activities and activates POU5F1 expression. Interacts with NCOA3; mediates the interaction between ESRRB and RNA polymerase II complexes and allows NCOA3 corecruitment to ESRRB, KLF4, NANOG, and SOX2 enhancer regions to trigger ESRRB-dependent gene activation involved in self-renewal and pluripotency. Interacts with KDM1A; co-occupes the core set of ESRRB targets including ELF5 and EOMES. Interacts with the multiprotein complex Integrator, at least composed of INTS1, INTS2, INTS3, INTS4, INTS5, INTS6, INTS7, INTS8, INTS9/RC74, INTS10, INTS11/CPSF3L and INTS12; ESRRB is probably not a core component of the integrator complex and associates to integrator via its interaction with INTS1 and INTS9; attracts the transcriptional machinery. Interacts with JARID2. Interacts with POU5F1; recruits ESRRB near the POU5F1-SOX2 element in the NANOG proximal promoter leading to activation of NANOG expression; the interaction is DNA independent. Interacts with NFE2L2; represses NFE2L2 transcriptional activity. Isoform 1 interacts with ESR1. Acetylated by PCAF/KAT2 (in vitro).

The protein resides in the nucleus. Its subcellular location is the cytoplasm. It is found in the chromosome. Transcription factor that binds a canonical ESRRB recognition (ERRE) sequence 5'TCAAGGTCA-3' localized on promoter and enhancer of targets genes regulating their expression or their transcription activity. Plays a role, in a LIF-independent manner, in maintainance of self-renewal and pluripotency of embryonic and trophoblast stem cells through different signaling pathways including FGF signaling pathway and Wnt signaling pathways. Involved in morula development (2-16 cells embryos) by acting as a regulator at the 8-cell stage. Upon FGF signaling pathway activation, interacts with KDM1A by directly binding to enhancer site of ELF5 and EOMES and activating their transcription leading to self-renewal of trophoblast stem cells. Also regulates expression of multiple rod-specific genes and is required for survival of this cell type. Plays a role as transcription factor activator of GATA6, NR0B1, POU5F1 and PERM1. Plays a role as transcription factor repressor of NFE2L2 transcriptional activity and ESR1 transcriptional activity. During mitosis remains bound to a subset of interphase target genes, including pluripotency regulators, through the canonical ESRRB recognition (ERRE) sequence, leading to their transcriptional activation in early G1 phase. Can coassemble on structured DNA elements with other transcription factors like SOX2, POU5F1, KDM1A and NCOA3 to trigger ESRRB-dependent gene activation. This mechanism, in the case of SOX2 corecruitment prevents the embryonic stem cells (ESCs) to epiblast stem cells (EpiSC) transition through positive regulation of NR0B1 that inhibits the EpiSC transcriptional program. Also plays a role inner ear development by controlling expression of ion channels and transporters and in early placentation. Its function is as follows. Transcription factor that binds a canonical ESRRB recognition (ERRE) sequence 5'TCAAGGTCA-3' localized on promoter and enhancer of targets genes regulating their expression or their transcription activity. Positively regulates ESR1 transcriptional activity upon E2 stimulation. The polypeptide is Steroid hormone receptor ERR2 (Homo sapiens (Human)).